Consider the following 354-residue polypeptide: Uroporphyrinogen decarboxylase (354 aa).

Substrate-binding positions include 30-34, aspartate 79, tyrosine 154, serine 209, and histidine 333; that span reads RQAGR.

This sequence belongs to the uroporphyrinogen decarboxylase family. Homodimer.

It is found in the cytoplasm. It carries out the reaction uroporphyrinogen III + 4 H(+) = coproporphyrinogen III + 4 CO2. It participates in porphyrin-containing compound metabolism; protoporphyrin-IX biosynthesis; coproporphyrinogen-III from 5-aminolevulinate: step 4/4. Its function is as follows. Catalyzes the decarboxylation of four acetate groups of uroporphyrinogen-III to yield coproporphyrinogen-III. The polypeptide is Uroporphyrinogen decarboxylase (Mycolicibacterium vanbaalenii (strain DSM 7251 / JCM 13017 / BCRC 16820 / KCTC 9966 / NRRL B-24157 / PYR-1) (Mycobacterium vanbaalenii)).